Consider the following 759-residue polypeptide: Pseudocleavage protein nop-1 (759 aa).

Disordered regions lie at residues 1–46, 334–361, 379–413, 440–495, and 732–759; these read MSAP…SSIF, KIFPGKSESKDRRMSDNNQASEQYMDKK, LSVNDSASKNPKDLTESPQQPKLRKKTASSSNLSQ, QSSR…KKER, and ESDGPASSNDDFDTQSTASTSTVFGAKI. Over residues 10–42 the composition is skewed to basic and acidic residues; that stretch reads DIHSDDRDHADHQTKKEKHWFEEKSEQNGENRR. Over residues 448–465 the composition is skewed to low complexity; that stretch reads TGNSSISSGVGSIASGTS. Residues 473 to 482 show a composition bias toward polar residues; the sequence is GSRSGQSISR. A compositionally biased stretch (basic and acidic residues) spans 485 to 495; the sequence is SRRDDEGKKER. A compositionally biased stretch (polar residues) spans 736–759; it reads PASSNDDFDTQSTASTSTVFGAKI.

It is found in the nucleus. The protein resides in the cytoplasm. It localises to the cell cortex. Its subcellular location is the cleavage furrow. Its function is as follows. Required for formation of the pseudocleavage furrow during the first cleavage of the embryo and also mediates aster-induced furrowing during cytokinesis. Promotes cortical recruitment of ani-1 and nmy-2 during pseudocleavage and cytokinesis and promotes the accumulation of actin at furrowing regions. Regulates establishment of embryonic cell polarity. The protein is Pseudocleavage protein nop-1 (nop-1) of Caenorhabditis elegans.